A 474-amino-acid chain; its full sequence is Solute carrier family 49 member A3 (474 aa).

A disordered region spans residues 1-20 (MEGESAETEPLIQSSSAADR). Transmembrane regions (helical) follow at residues 38–58 (WFIL…WLTF), 69–89 (LCVS…AAVV), 105–126 (CSLI…CGVL), 134–154 (VFAV…LVIF), 175–195 (LASM…PLIV), 201–221 (LFLL…LATL), 258–278 (WILL…STLL), 290–310 (GFAG…AFLL), 326–346 (ICMC…QLPA), 349–369 (VLLV…YPVG), 388–408 (LIFT…QALA), and 428–448 (VPVL…VVFF).

The protein belongs to the major facilitator superfamily.

The protein resides in the membrane. This is Solute carrier family 49 member A3 (slc49a3) from Danio rerio (Zebrafish).